A 553-amino-acid polypeptide reads, in one-letter code: 4-coumarate--CoA ligase (553 aa).

Residues serine 198, serine 199, glycine 200, threonine 201, threonine 202, and lysine 206 each coordinate ATP. Residues tyrosine 248 and serine 252 each coordinate (E)-4-coumaroyl-AMP. CoA is bound at residue lysine 269. Residues 271–340 form an SBD1 region; it reads EIVPFLELIQ…AKFPNAKLGQ (70 aa). Alanine 318, glutamine 340, glycine 341, threonine 345, and methionine 353 together coordinate (E)-4-coumaroyl-AMP. 3 residues coordinate ATP: glutamine 340, glycine 341, and threonine 345. The SBD2 stretch occupies residues 341 to 408; it reads GYGMTEAGPV…IRGDQIMKGY (68 aa). Positions 429 and 444 each coordinate ATP. (E)-4-coumaroyl-AMP is bound by residues lysine 446 and lysine 450. Positions 452 and 453 each coordinate CoA. Lysine 535 is an ATP binding site.

It belongs to the ATP-dependent AMP-binding enzyme family. The cofactor is Mg(2+).

The catalysed reaction is (E)-4-coumarate + ATP + CoA = (E)-4-coumaroyl-CoA + AMP + diphosphate. It catalyses the reaction (E)-4-coumarate + ATP + H(+) = (E)-4-coumaroyl-AMP + diphosphate. It carries out the reaction (E)-4-coumaroyl-AMP + CoA = (E)-4-coumaroyl-CoA + AMP + H(+). It participates in phytoalexin biosynthesis; 3,4',5-trihydroxystilbene biosynthesis; 3,4',5-trihydroxystilbene from trans-4-coumarate: step 1/2. In terms of biological role, carboxylate--CoA ligase that may use 4-coumarate as substrate. Follows a two-step reaction mechanism, wherein the carboxylate substrate first undergoes adenylation by ATP, followed by a thioesterification in the presence of CoA to yield the final CoA thioester. In Vanilla planifolia (Vanilla), this protein is 4-coumarate--CoA ligase.